Reading from the N-terminus, the 276-residue chain is Probable endonuclease LCL3 (276 aa).

A helical transmembrane segment spans residues 17 to 37 (FNVVILSIFFSGSFIGAWAFF). Positions 58–263 (RWLFGKVTAV…KARRRGIWSQ (206 aa)) constitute a TNase-like domain. Residue arginine 154 is part of the active site. Aspartate 159 contacts Ca(2+). Catalysis depends on residues glutamate 162 and arginine 202.

This sequence belongs to the LCL3 family.

It is found in the mitochondrion. The protein localises to the membrane. The polypeptide is Probable endonuclease LCL3 (LCL3) (Zygosaccharomyces rouxii (strain ATCC 2623 / CBS 732 / NBRC 1130 / NCYC 568 / NRRL Y-229)).